We begin with the raw amino-acid sequence, 200 residues long: Superoxide dismutase [Fe] (200 aa).

The Fe cation site is built by H28, H82, D165, and H169.

Belongs to the iron/manganese superoxide dismutase family. Homodimer. Fe cation is required as a cofactor.

The enzyme catalyses 2 superoxide + 2 H(+) = H2O2 + O2. Functionally, destroys superoxide anion radicals which are normally produced within the cells and which are toxic to biological systems. The sequence is that of Superoxide dismutase [Fe] (sodB) from Rhodobacter capsulatus (Rhodopseudomonas capsulata).